Here is a 332-residue protein sequence, read N- to C-terminus: HPr kinase/phosphorylase (332 aa).

Active-site residues include His-153 and Lys-174. Position 168–175 (168–175 (GKSGLGKS)) interacts with ATP. Mg(2+) is bound at residue Ser-175. Asp-192 serves as the catalytic Proton acceptor; for phosphorylation activity. Proton donor; for dephosphorylation activity. The important for the catalytic mechanism of both phosphorylation and dephosphorylation stretch occupies residues 217–226 (MEIRGLGVVD). Position 218 (Glu-218) interacts with Mg(2+). Arg-259 is an active-site residue. The segment at 280 to 285 (PIFPGK) is important for the catalytic mechanism of dephosphorylation.

This sequence belongs to the HPrK/P family. In terms of assembly, homohexamer. Requires Mg(2+) as cofactor.

The enzyme catalyses [HPr protein]-L-serine + ATP = [HPr protein]-O-phospho-L-serine + ADP + H(+). The catalysed reaction is [HPr protein]-O-phospho-L-serine + phosphate + H(+) = [HPr protein]-L-serine + diphosphate. Catalyzes the ATP- as well as the pyrophosphate-dependent phosphorylation of a specific serine residue in HPr, a phosphocarrier protein of the phosphoenolpyruvate-dependent sugar phosphotransferase system (PTS). HprK/P also catalyzes the pyrophosphate-producing, inorganic phosphate-dependent dephosphorylation (phosphorolysis) of seryl-phosphorylated HPr (P-Ser-HPr). The protein is HPr kinase/phosphorylase of Chlorobium phaeovibrioides (strain DSM 265 / 1930) (Prosthecochloris vibrioformis (strain DSM 265)).